The primary structure comprises 601 residues: MDQINVLINKLIYDTMNNITSLMLAVSNYEIHDNYDTVKSLIDCGFDVNAVDKHGKSVLMYAINIDSDKNINVIKLLIDHGADVNHVDSYQRSVLIHTCMYMEYGYNNKTISLLIDKGANINYICNGKNILMMIHKYLSEETFQEVFHLINNKIDINYNRSGIIRENILMRIIKKLDNKYSITTIKLLLEHGINIDHINIYGQTALMYACIYINGLKNIPIIKLLLEYGANINSKCTKGWSPLMSVFKNDIIDIKTIKFLVEKGAEINSKNCKNETMLYVFCKKLSTRIYGQACVKIFDFLIKKGISIDNPNDKGYTPLMAFIIKISEYNEYTEKFIKLLLDYGANINSKDIHGSSILNKVCCDVVSGSVSHCKIEIINTLIKYGADVNSTTLDHKTILMNLRYSIHSENYITVLEILLRNGANPNIYDEKYHKFPLLIDILNRGGELRIIKLMLQYNIDPNIVDNIGNNALLFVAKHYKKNERFSFLKLLLTYGASYNCVNKKGKSFSDYVLDKEVEYYSRTITNLSKDNRIMKNVIDSIPIKVPEKIYCLESFKMKIIRFKWNLCNRIDYDDEAIMNYLGTNDPVRLIQIIDESIKYDH.

12 ANK repeats span residues 17–50 (NNIT…DVNA), 54–86 (HGKS…DVNH), 91–123 (QRSV…NINY), 165–197 (RENI…NIDH), 201–234 (YGQT…NINS), 238–269 (KGWS…EINS), 274–310 (NETM…SIDN), 314–349 (KGYT…NINS), 361–390 (VCCD…DVNS), 397–427 (TILM…NPNI), 432–463 (YHKF…DPNI), and 467–500 (IGNN…SYNC).

The protein is Putative ankyrin repeat protein R841 of Acanthamoeba polyphaga mimivirus (APMV).